The sequence spans 55 residues: ATP synthase F(0) complex subunit 8 (55 aa).

The chain crosses the membrane as a helical span at residues N7–I24. Residues N35 to T55 are disordered. A compositionally biased stretch (low complexity) spans P37–T55.

The protein belongs to the ATPase protein 8 family. Component of the ATP synthase complex composed at least of ATP5F1A/subunit alpha, ATP5F1B/subunit beta, ATP5MC1/subunit c (homooctomer), MT-ATP6/subunit a, MT-ATP8/subunit 8, ATP5ME/subunit e, ATP5MF/subunit f, ATP5MG/subunit g, ATP5MK/subunit k, ATP5MJ/subunit j, ATP5F1C/subunit gamma, ATP5F1D/subunit delta, ATP5F1E/subunit epsilon, ATP5PF/subunit F6, ATP5PB/subunit b, ATP5PD/subunit d, ATP5PO/subunit OSCP. ATP synthase complex consists of a soluble F(1) head domain (subunits alpha(3) and beta(3)) - the catalytic core - and a membrane F(0) domain - the membrane proton channel (subunits c, a, 8, e, f, g, k and j). These two domains are linked by a central stalk (subunits gamma, delta, and epsilon) rotating inside the F1 region and a stationary peripheral stalk (subunits F6, b, d, and OSCP).

The protein localises to the mitochondrion membrane. Subunit 8, of the mitochondrial membrane ATP synthase complex (F(1)F(0) ATP synthase or Complex V) that produces ATP from ADP in the presence of a proton gradient across the membrane which is generated by electron transport complexes of the respiratory chain. ATP synthase complex consist of a soluble F(1) head domain - the catalytic core - and a membrane F(1) domain - the membrane proton channel. These two domains are linked by a central stalk rotating inside the F(1) region and a stationary peripheral stalk. During catalysis, ATP synthesis in the catalytic domain of F(1) is coupled via a rotary mechanism of the central stalk subunits to proton translocation. In vivo, can only synthesize ATP although its ATP hydrolase activity can be activated artificially in vitro. Part of the complex F(0) domain. The protein is ATP synthase F(0) complex subunit 8 of Chaetura pelagica (Chimney swift).